A 61-amino-acid polypeptide reads, in one-letter code: Small ribosomal subunit protein uS14 (61 aa).

4 residues coordinate Zn(2+): C24, C27, C40, and C43.

It belongs to the universal ribosomal protein uS14 family. Zinc-binding uS14 subfamily. As to quaternary structure, part of the 30S ribosomal subunit. Contacts proteins S3 and S10. Requires Zn(2+) as cofactor.

Functionally, binds 16S rRNA, required for the assembly of 30S particles and may also be responsible for determining the conformation of the 16S rRNA at the A site. In Mesoplasma florum (strain ATCC 33453 / NBRC 100688 / NCTC 11704 / L1) (Acholeplasma florum), this protein is Small ribosomal subunit protein uS14.